The sequence spans 320 residues: Pyrroline-5-carboxylate reductase 1, mitochondrial (320 aa).

Position 2 is an N-acetylserine (S2). Residues 6–11 (IGAGQL) and S34 each bind NADP(+). A8, Q10, L11, S34, D36, N56, V70, K71, and A97 together coordinate NADPH. Residues N56, 69 to 72 (AVKP), and 95 to 97 (CAA) contribute to the NADP(+) site. E164 lines the L-proline pocket. NADPH is bound at residue N230. L-proline is bound by residues A237 and T238. Residue S278 is modified to Phosphoserine. Residues 292 to 320 (LDSPPGTSLAPSGHSKLLPRSMAPAGKQD) are disordered.

It belongs to the pyrroline-5-carboxylate reductase family. Homodecamer; composed of 5 homodimers. Interacts with LTO1.

Its subcellular location is the mitochondrion. The catalysed reaction is L-proline + NADP(+) = (S)-1-pyrroline-5-carboxylate + NADPH + 2 H(+). It carries out the reaction L-proline + NAD(+) = (S)-1-pyrroline-5-carboxylate + NADH + 2 H(+). It participates in amino-acid biosynthesis; L-proline biosynthesis; L-proline from L-glutamate 5-semialdehyde: step 1/1. Oxidoreductase that catalyzes the last step in proline biosynthesis, which corresponds to the reduction of pyrroline-5-carboxylate to L-proline using NAD(P)H. At physiologic concentrations, has higher specific activity in the presence of NADH. Involved in the cellular response to oxidative stress. This chain is Pyrroline-5-carboxylate reductase 1, mitochondrial (PYCR1), found in Bos taurus (Bovine).